The sequence spans 405 residues: Glucose-1-phosphate adenylyltransferase (405 aa).

Residues Y99, G164, 179 to 180 (EK), and S197 each bind alpha-D-glucose 1-phosphate.

This sequence belongs to the bacterial/plant glucose-1-phosphate adenylyltransferase family. In terms of assembly, homotetramer.

It catalyses the reaction alpha-D-glucose 1-phosphate + ATP + H(+) = ADP-alpha-D-glucose + diphosphate. It functions in the pathway glycan biosynthesis; glycogen biosynthesis. Functionally, involved in the biosynthesis of ADP-glucose, a building block required for the elongation reactions to produce glycogen. Catalyzes the reaction between ATP and alpha-D-glucose 1-phosphate (G1P) to produce pyrophosphate and ADP-Glc. The sequence is that of Glucose-1-phosphate adenylyltransferase from Corynebacterium aurimucosum (strain ATCC 700975 / DSM 44827 / CIP 107346 / CN-1) (Corynebacterium nigricans).